The primary structure comprises 126 residues: MAKITTDELIESFKEMTLIELSEFVSKFEEVFKVTAAAPVAAAAAPIEPAAEAAPEKTTFDVILEAAGDKKIQVIKEVRTITGLGLGEAKALVDGVPSKVLEGANKDAADAAKAQLEAAGAQVSVK.

Belongs to the bacterial ribosomal protein bL12 family. Homodimer. Part of the ribosomal stalk of the 50S ribosomal subunit. Forms a multimeric L10(L12)X complex, where L10 forms an elongated spine to which 2 to 4 L12 dimers bind in a sequential fashion. Binds GTP-bound translation factors.

Forms part of the ribosomal stalk which helps the ribosome interact with GTP-bound translation factors. Is thus essential for accurate translation. This Tropheryma whipplei (strain TW08/27) (Whipple's bacillus) protein is Large ribosomal subunit protein bL12.